Reading from the N-terminus, the 122-residue chain is S-adenosylmethionine decarboxylase proenzyme (122 aa).

The active-site Schiff-base intermediate with substrate; via pyruvic acid is Ser63. Position 63 is a pyruvic acid (Ser); by autocatalysis (Ser63). His68 acts as the Proton acceptor; for processing activity in catalysis. Cys83 serves as the catalytic Proton donor; for catalytic activity.

This sequence belongs to the prokaryotic AdoMetDC family. Type 1 subfamily. As to quaternary structure, heterotetramer of two alpha and two beta chains arranged as a dimer of alpha/beta heterodimers. Pyruvate serves as cofactor. Is synthesized initially as an inactive proenzyme. Formation of the active enzyme involves a self-maturation process in which the active site pyruvoyl group is generated from an internal serine residue via an autocatalytic post-translational modification. Two non-identical subunits are generated from the proenzyme in this reaction, and the pyruvate is formed at the N-terminus of the alpha chain, which is derived from the carboxyl end of the proenzyme. The post-translation cleavage follows an unusual pathway, termed non-hydrolytic serinolysis, in which the side chain hydroxyl group of the serine supplies its oxygen atom to form the C-terminus of the beta chain, while the remainder of the serine residue undergoes an oxidative deamination to produce ammonia and the pyruvoyl group blocking the N-terminus of the alpha chain.

The enzyme catalyses S-adenosyl-L-methionine + H(+) = S-adenosyl 3-(methylsulfanyl)propylamine + CO2. It participates in amine and polyamine biosynthesis; S-adenosylmethioninamine biosynthesis; S-adenosylmethioninamine from S-adenosyl-L-methionine: step 1/1. Catalyzes the decarboxylation of S-adenosylmethionine to S-adenosylmethioninamine (dcAdoMet), the propylamine donor required for the synthesis of the polyamines spermine and spermidine from the diamine putrescine. The protein is S-adenosylmethionine decarboxylase proenzyme of Methanococcus vannielii (strain ATCC 35089 / DSM 1224 / JCM 13029 / OCM 148 / SB).